The primary structure comprises 622 residues: Glutamyl-tRNA(Gln) amidotransferase subunit B, mitochondrial (622 aa).

The transit peptide at 1-54 (MSRIPTRELGRYLLQGQICQRGCVASSVSKSRAKQLGRHPLLPHDRHQPTQARH) directs the protein to the mitochondrion. The segment at 30–67 (KSRAKQLGRHPLLPHDRHQPTQARHAHTVTTTATPTQL) is disordered. Positions 57-67 (TVTTTATPTQL) are enriched in low complexity.

Belongs to the GatB/GatE family. GatB subfamily. Subunit of the heterotrimeric GatCAB amidotransferase (AdT) complex, composed of A, B and C subunits.

The protein resides in the mitochondrion. The catalysed reaction is L-glutamyl-tRNA(Gln) + L-glutamine + ATP + H2O = L-glutaminyl-tRNA(Gln) + L-glutamate + ADP + phosphate + H(+). Allows the formation of correctly charged Gln-tRNA(Gln) through the transamidation of misacylated Glu-tRNA(Gln) in the mitochondria. The reaction takes place in the presence of glutamine and ATP through an activated gamma-phospho-Glu-tRNA(Gln). The chain is Glutamyl-tRNA(Gln) amidotransferase subunit B, mitochondrial from Verticillium alfalfae (strain VaMs.102 / ATCC MYA-4576 / FGSC 10136) (Verticillium wilt of alfalfa).